The primary structure comprises 360 residues: POU domain, class 5, transcription factor 1 (360 aa).

Disordered regions lie at residues 1–53 (MAGH…GVGP) and 87–117 (QGGLETSQPEGEAGAGVESNSDGASPEPCTV). The 9aaTAD motif lies at 4 to 12 (HLASDFAFS). Residues 17 to 26 (GGGDGPGGPE) show a composition bias toward gly residues. Ser-111 bears the Phosphoserine; by MAPK mark. Lys-123 is covalently cross-linked (Glycyl lysine isopeptide (Lys-Gly) (interchain with G-Cter in SUMO)). Residues 138–212 (DIKALQKELE…LLQKWVEEAD (75 aa)) enclose the POU-specific domain. 2 residues coordinate DNA: Arg-157 and Gln-164. 2 DNA-binding regions span residues 180-186 (SQTTICR) and 193-196 (SFKN). A DNA-binding region (homeobox) is located at residues 230–289 (RKRKRTSIENRVRGSLENLFLQCPKPTLQQISHIAQQLGLEKDVVRVWFCNRRQKGKRSS). Residue Thr-235 is modified to Phosphothreonine. Phosphoserine is present on residues Ser-236, Ser-289, Ser-290, and Ser-355.

It belongs to the POU transcription factor family. Class-5 subfamily. Interacts with PKM. Interacts with WWP2. Interacts with UBE2I and ZSCAN10. Interacts with PCGF1. Interacts with ESRRB; recruits ESRRB near the POU5F1-SOX2 element in the NANOG proximal promoter; the interaction is DNA independent. Interacts with ZNF322. Interacts with MAPK8 and MAPK9; the interaction allows MAPK8 and MAPK9 to phosphorylate POU5F1 on Ser-355. Interacts (when phosphorylated on Ser-355) with FBXW8. Interacts with FBXW4. Interacts with SOX2 and SOX15; binds synergistically with either SOX2 or SOX15 to DNA. Interacts with DDX56. Post-translationally, sumoylation enhances the protein stability, DNA binding and transactivation activity. Sumoylation is required for enhanced YES1 expression. In terms of processing, ubiquitinated; undergoes 'Lys-63'-linked polyubiquitination by WWP2 leading to proteasomal degradation. ERK1/2-mediated phosphorylation at Ser-111 promotes nuclear exclusion and proteasomal degradation. Phosphorylation at Thr-235 and Ser-236 decrease DNA-binding and alters ability to activate transcription.

It localises to the cytoplasm. Its subcellular location is the nucleus. Transcription factor that binds to the octamer motif (5'-ATTTGCAT-3'). Forms a trimeric complex with SOX2 or SOX15 on DNA and controls the expression of a number of genes involved in embryonic development such as YES1, FGF4, UTF1 and ZFP206. Critical for early embryogenesis and for embryonic stem cell pluripotency. The protein is POU domain, class 5, transcription factor 1 (POU5F1) of Macaca mulatta (Rhesus macaque).